Here is a 104-residue protein sequence, read N- to C-terminus: Integration host factor subunit beta (104 aa).

Positions 83–95 (GKEMRERLNRDSG) are enriched in basic and acidic residues. A disordered region spans residues 83–104 (GKEMRERLNRDSGDDAPTSDTA).

It belongs to the bacterial histone-like protein family. In terms of assembly, heterodimer of an alpha and a beta chain.

This protein is one of the two subunits of integration host factor, a specific DNA-binding protein that functions in genetic recombination as well as in transcriptional and translational control. This is Integration host factor subunit beta from Rhodopseudomonas palustris (strain ATCC BAA-98 / CGA009).